The chain runs to 375 residues: Alcohol dehydrogenase 1 (375 aa).

N-acetylserine is present on serine 2. Residues cysteine 47, histidine 68, cysteine 98, cysteine 101, cysteine 104, cysteine 112, and cysteine 175 each contribute to the Zn(2+) site. Residues 200 to 205 (GLGGVG), aspartate 224, and lysine 229 contribute to the NAD(+) site. Lysine 234 bears the N6-succinyllysine mark. 293–295 (VGV) lines the NAD(+) pocket. Lysine 340 carries the N6-succinyllysine modification. Arginine 370 lines the NAD(+) pocket.

It belongs to the zinc-containing alcohol dehydrogenase family. Class-I subfamily. Dimer of identical or non-identical chains of three types (A, B, C), which are coded by 3 separate genes at different loci. Requires Zn(2+) as cofactor. In terms of tissue distribution, expressed at high levels in the liver, small intestine and eye, at moderate levels in kidney, ovary and uterus, and at low levels in the spinal cord, thymus, heart, stomach mucosa, skin and testis.

It is found in the cytoplasm. The enzyme catalyses a primary alcohol + NAD(+) = an aldehyde + NADH + H(+). It carries out the reaction a secondary alcohol + NAD(+) = a ketone + NADH + H(+). This chain is Alcohol dehydrogenase 1 (Adh1), found in Mus musculus (Mouse).